A 131-amino-acid polypeptide reads, in one-letter code: Fumarate reductase subunit C (131 aa).

Helical transmembrane passes span 30–50, 61–81, and 110–130; these read EGTA…LFAL, IGFL…AAAL, and IKGL…VALF.

This sequence belongs to the FrdC family. As to quaternary structure, part of an enzyme complex containing four subunits: a flavoprotein (FrdA), an iron-sulfur protein (FrdB), and two hydrophobic anchor proteins (FrdC and FrdD).

The protein localises to the cell inner membrane. Its function is as follows. Two distinct, membrane-bound, FAD-containing enzymes are responsible for the catalysis of fumarate and succinate interconversion; fumarate reductase is used in anaerobic growth, and succinate dehydrogenase is used in aerobic growth. Anchors the catalytic components of the fumarate reductase complex to the cell inner membrane, binds quinones. This Klebsiella pneumoniae subsp. pneumoniae (strain ATCC 700721 / MGH 78578) protein is Fumarate reductase subunit C.